Reading from the N-terminus, the 1379-residue chain is Protein three rows (1379 aa).

The segment at 1031–1037 (VEPIRKQ) is separase cleavage-site. 3 disordered regions span residues 1206–1231 (PEDK…KQSA), 1248–1309 (PSAT…ATSK), and 1328–1379 (ITTS…RHRH). Over residues 1213–1228 (ATGSVSAVKNTASKVK) the composition is skewed to polar residues. Low complexity predominate over residues 1248–1267 (PSATSCSSSGGSGTENTPPS).

In terms of assembly, interacts with pim and Sse. Cleavage of thr contributes to inactivation of Sse. Proteolytically cleaved after the metaphase-to-anaphase transition, C-terminal cleavage product is degraded. Cleavage can only proceed within complexes that contain active Sse. During embryogenesis, expressed in Malpighian tubule buds, and epithelia of foregut and hindgut.

The protein localises to the cytoplasm. Its function is as follows. Required specifically for chromosome disjunction during all mitoses; maternally provided protein is sufficient until mitosis 14 then zygotic protein is required. Involved in formation and/or maintenance of epithelial structures: bud extension during Malpighian tubule development, and foregut and hindgut morphogenesis. The chain is Protein three rows (thr) from Drosophila melanogaster (Fruit fly).